Consider the following 86-residue polypeptide: Putative pro-MCH-like protein 2 (86 aa).

Residues 31–49 (GSVAFPAENGVQDTESTLE) are NGE-like. The disordered stretch occupies residues 40–60 (GVQDTESTLEKRETGDEENSA). The NEI-like stretch occupies residues 52–64 (ETGDEENSAKFPI). Residues 68 to 86 (DFDTLRCMLGRVYQRCWQV) are melanin-concentrating hormone-like.

It belongs to the melanin-concentrating hormone family. Expressed in testis but not in brain.

In Homo sapiens (Human), this protein is Putative pro-MCH-like protein 2 (PMCHL2).